Here is a 122-residue protein sequence, read N- to C-terminus: MIQPQSYLNVADNSGARKLMCIRVLGTSDREYADTGDVIVAVVKEAVPNMPLKKSEVVRAVVVRTCKELKRDNGMRIRFDDNAAVVINQEGNPRGTRVFGPIARELREYNFTKIISLAPEVL.

Belongs to the universal ribosomal protein uL14 family. In terms of assembly, part of the 50S ribosomal subunit.

The protein localises to the plastid. It is found in the chloroplast. Binds to 23S rRNA. This chain is Large ribosomal subunit protein uL14c, found in Angiopteris evecta (Mule's foot fern).